We begin with the raw amino-acid sequence, 318 residues long: 2-dehydro-3-deoxygalactonokinase (318 aa).

Residues 35-39 (GAESN), Y90, 105-107 (YDR), and R169 contribute to the substrate site. ATP-binding positions include 167-169 (NYR), 228-233 (TRGEDG), and 257-260 (GTGD). Residues D260 and D296 each coordinate substrate. The Proton acceptor role is filled by D260.

It belongs to the carbohydrate kinase PfkB family. In terms of assembly, homohexamer.

The enzyme catalyses 2-dehydro-3-deoxy-D-galactonate + ATP = 2-dehydro-3-deoxy-6-phospho-D-galactonate + ADP + H(+). In terms of biological role, involved in galactose catabolism. Catalyzes the phosphorylation of 2-keto-3-deoxygalactonate (KDGal) to produce 2-keto-3-deoxy-6-phosphogalactonate (KDPGal). Can also phosphorylate 2-keto-3-deoxygluconate (KDG) to 2-keto-3-deoxy-6-phosphogluconate (KDPG), but the catalytic efficiency for KDGal is 50-fold higher than for KDG. This is 2-dehydro-3-deoxygalactonokinase from Haloferax volcanii (strain ATCC 29605 / DSM 3757 / JCM 8879 / NBRC 14742 / NCIMB 2012 / VKM B-1768 / DS2) (Halobacterium volcanii).